Reading from the N-terminus, the 259-residue chain is UPF0246 protein PputW619_0896 (259 aa).

It belongs to the UPF0246 family.

The polypeptide is UPF0246 protein PputW619_0896 (Pseudomonas putida (strain W619)).